A 497-amino-acid chain; its full sequence is Probable zinc metalloprotease TRV_03476 (497 aa).

Residues 1–24 form the signal peptide; the sequence is MRFLISSLLSGLALLTSLHAFVLA. Asparagine 100 and asparagine 121 each carry an N-linked (GlcNAc...) asparagine glycan. Histidine 171, aspartate 191, and glutamate 227 together coordinate Zn(2+). Asparagine 242 carries an N-linked (GlcNAc...) asparagine glycan. Aspartate 254 contributes to the Zn(2+) binding site. Residues 411 to 497 enclose the Fibronectin type-III domain; that stretch reads MPRNVRVNTN…ERGVAVLPFP (87 aa). An N-linked (GlcNAc...) asparagine glycan is attached at asparagine 424.

Belongs to the peptidase M28 family. M28B subfamily. The cofactor is Zn(2+).

The protein resides in the secreted. The sequence is that of Probable zinc metalloprotease TRV_03476 from Trichophyton verrucosum (strain HKI 0517).